Here is a 454-residue protein sequence, read N- to C-terminus: DNA-binding protein (454 aa).

Residues 1 to 41 (MSHKKVVAISESSSDEEVPVAPPTAPPKKRQRKAVEEPRGH) form a disordered region. Tyr129 carries the phosphotyrosine; by host modification. Cys213 and His215 together coordinate Zn(2+). Residues 226-260 (VEMDVNSENAQRALKENPEKTKIVSNRWGRNVVQF) are flexible loop. Zn(2+) contacts are provided by Cys268, Cys284, Cys325, Cys327, Cys378, and Cys394. Positions 440-454 (TILPQGQHDDDLVLF) are C-terminal arm, DBP binding.

The protein belongs to the adenoviridae E2A DNA-binding protein family. In terms of assembly, homomultimerizes on viral ssDNA bound to pTP. Forms a initiation complex with viral polymerase, pTP and hosts NFIA and POU2F1/OCT1. Interacts with host SRCAP.

The protein localises to the host nucleus. Its function is as follows. Plays a role in the elongation phase of viral strand displacement replication by unwinding the template in an ATP-independent fashion, employing its capacity to form multimers. Also enhances the rate of initiation. Released from template upon second strand synthesis. Assembles in complex with viral pTP, viral pol, host NFIA and host POU2F1/OCT1 on viral origin of replication. Covers the whole ssDNA genome during synthesis. The complementary strand synthesis induces its relese from DNA template. May inhibit cellular transcription mediated by the interaction between host SRCAP and CBP. The sequence is that of DNA-binding protein from Canine adenovirus serotype 1 (strain RI261) (CAdV-1).